The primary structure comprises 462 residues: cAMP-dependent protein kinase regulatory subunit (462 aa).

The interval 54–203 (TPSPRFPPSP…RLKYAIEGNF (150 aa)) is dimerization and phosphorylation. The tract at residues 79–157 (FGANANPFGG…PTTDSYPAQY (79 aa)) is disordered. Low complexity predominate over residues 80–102 (GANANPFGGSSSNPNPFGGSASP). A Phosphoserine modification is found at Ser-164. Residues 204-333 (LFSH…FLEE), Glu-282, Arg-291, 336-453 (ILSS…KTGV), Glu-401, and Arg-410 each bind 3',5'-cyclic AMP.

Belongs to the cAMP-dependent kinase regulatory chain family. As to quaternary structure, tetramer, composed of 2 regulatory (R) and 2 catalytic (C) subunits. In the presence of cAMP it dissociates into 2 active monomeric C subunits and an R dimer.

This is cAMP-dependent protein kinase regulatory subunit (pkar1) from Hypocrea atroviridis (Trichoderma atroviride).